We begin with the raw amino-acid sequence, 138 residues long: Ribosome-binding factor A (138 aa).

This sequence belongs to the RbfA family. In terms of assembly, monomer. Binds 30S ribosomal subunits, but not 50S ribosomal subunits or 70S ribosomes.

The protein resides in the cytoplasm. In terms of biological role, one of several proteins that assist in the late maturation steps of the functional core of the 30S ribosomal subunit. Associates with free 30S ribosomal subunits (but not with 30S subunits that are part of 70S ribosomes or polysomes). Required for efficient processing of 16S rRNA. May interact with the 5'-terminal helix region of 16S rRNA. The chain is Ribosome-binding factor A from Bradyrhizobium sp. (strain BTAi1 / ATCC BAA-1182).